The sequence spans 473 residues: Ras-GEF domain-containing family member 1B (473 aa).

In terms of domain architecture, N-terminal Ras-GEF spans 34-161; it reads HDNNLLSGSL…NVQQMMQCLI (128 aa). Residues 205-453 form the Ras-GEF domain; that stretch reads DPYTLAQQLT…YLASYESEGP (249 aa).

Interacts with CCDC124 during cytokinesis. Interacts with Ras family proteins. As to expression, constitutively expressed in brain, intestine and testis. Low constitutive expression, if any, in heart, lung, lymph nodes and thymus. Up-regulated in heart, kidney, liver, lymph nodes, spleen and thymus at day 20 after infection with Trypanosoma cruzi. Not detected in muscle.

Its subcellular location is the early endosome. The protein resides in the late endosome. It is found in the midbody. In terms of biological role, guanine nucleotide exchange factor (GEF) with specificity for RAP2A, it doesn't seems to activate other Ras family proteins (in vitro). The sequence is that of Ras-GEF domain-containing family member 1B (Rasgef1b) from Mus musculus (Mouse).